The following is a 122-amino-acid chain: Ribonuclease pancreatic (122 aa).

Lysine 6 and arginine 9 together coordinate substrate. The Proton acceptor role is filled by histidine 11. 4 cysteine pairs are disulfide-bonded: cysteine 25–cysteine 83, cysteine 39–cysteine 94, cysteine 57–cysteine 109, and cysteine 64–cysteine 71. Residues 40 to 44 (KPVNT), lysine 65, and arginine 84 each bind substrate. Residue histidine 117 is the Proton donor of the active site.

It belongs to the pancreatic ribonuclease family. Monomer. Interacts with and forms tight 1:1 complexes with RNH1. Dimerization of two such complexes may occur. Interaction with RNH1 inhibits this protein. As to expression, pancreas.

The protein localises to the secreted. It carries out the reaction an [RNA] containing cytidine + H2O = an [RNA]-3'-cytidine-3'-phosphate + a 5'-hydroxy-ribonucleotide-3'-[RNA].. The enzyme catalyses an [RNA] containing uridine + H2O = an [RNA]-3'-uridine-3'-phosphate + a 5'-hydroxy-ribonucleotide-3'-[RNA].. Endonuclease that catalyzes the cleavage of RNA on the 3' side of pyrimidine nucleotides. Acts on single-stranded and double-stranded RNA. This is Ribonuclease pancreatic from Notamacropus rufogriseus (Red-necked wallaby).